Consider the following 232-residue polypeptide: Large ribosomal subunit protein uL1 (232 aa).

Belongs to the universal ribosomal protein uL1 family. In terms of assembly, part of the 50S ribosomal subunit.

Binds directly to 23S rRNA. The L1 stalk is quite mobile in the ribosome, and is involved in E site tRNA release. In terms of biological role, protein L1 is also a translational repressor protein, it controls the translation of the L11 operon by binding to its mRNA. This is Large ribosomal subunit protein uL1 from Bacillus licheniformis (strain ATCC 14580 / DSM 13 / JCM 2505 / CCUG 7422 / NBRC 12200 / NCIMB 9375 / NCTC 10341 / NRRL NRS-1264 / Gibson 46).